The following is a 408-amino-acid chain: Multidrug resistance protein MdtG (408 aa).

11 helical membrane passes run 16–36 (LIVA…VMPF), 58–78 (IVFS…GGLA), 92–112 (LGMG…QFLI), 115–135 (ALLG…ATQV), 146–166 (TLST…GLLA), 173–193 (PVFF…LFCI), 224–244 (LFVT…ILTL), 256–276 (VAFI…LSAP), 290–310 (ILIT…YVQT), 319–339 (FLLG…LVYN), and 378–398 (AVFL…WNSL).

Belongs to the major facilitator superfamily. DHA1 family. MdtG (TC 2.A.1.2.20) subfamily.

Its subcellular location is the cell inner membrane. In terms of biological role, confers resistance to fosfomycin and deoxycholate. The sequence is that of Multidrug resistance protein MdtG from Escherichia coli O127:H6 (strain E2348/69 / EPEC).